Reading from the N-terminus, the 378-residue chain is ATP phosphoribosyltransferase regulatory subunit (378 aa).

The protein belongs to the class-II aminoacyl-tRNA synthetase family. HisZ subfamily. Heteromultimer composed of HisG and HisZ subunits.

Its subcellular location is the cytoplasm. It participates in amino-acid biosynthesis; L-histidine biosynthesis; L-histidine from 5-phospho-alpha-D-ribose 1-diphosphate: step 1/9. In terms of biological role, required for the first step of histidine biosynthesis. May allow the feedback regulation of ATP phosphoribosyltransferase activity by histidine. This Brucella abortus (strain 2308) protein is ATP phosphoribosyltransferase regulatory subunit.